Here is a 111-residue protein sequence, read N- to C-terminus: UPF0122 protein LACR_1522 (111 aa).

Belongs to the UPF0122 family.

Its function is as follows. Might take part in the signal recognition particle (SRP) pathway. This is inferred from the conservation of its genetic proximity to ftsY/ffh. May be a regulatory protein. The chain is UPF0122 protein LACR_1522 from Lactococcus lactis subsp. cremoris (strain SK11).